We begin with the raw amino-acid sequence, 331 residues long: MDFHRLLQHKQQRWQRSSYLLIGLFLSVCVLYLLVGELWLSPFSAWSSLEQQLVWELRLPRLLAAAVIGASLAVAGATLQVLLGNVLAEPGVVGVSGGASVAMVILLLFFPSLNSPVAFMAAAVLGALLFTLLLVVMARKLRLTTARLLLVGVALGILSGAVVTWAFYFSDDLGLRQLMYWLMGSVAGVSWYQHLLSLVAVPVVIWLVLQGGVLDKLMLGEGHAKQLGIDIHRVRWRLILAIALLVGASVALGGVIGFVGLVVPHLLRLTLGSENRLLLPLSALCGALLLVSADLIARLALGSGELPLGVVTTTLGAPIFIWMLVRNHDSC.

A run of 9 helical transmembrane segments spans residues 20-42 (LLIG…WLSP), 62-84 (LLAA…VLLG), 91-113 (GVVG…FPSL), 117-136 (VAFM…LLVV), 148-170 (LLLV…FYFS), 190-209 (SWYQ…WLVL), 240-262 (LAIA…VGLV), 277-299 (LLLP…IARL), and 306-325 (LPLG…WMLV).

The protein belongs to the binding-protein-dependent transport system permease family. FecCD subfamily. In terms of assembly, the complex is composed of two ATP-binding proteins (BtuD), two transmembrane proteins (BtuC) and a solute-binding protein (BtuF).

The protein localises to the cell inner membrane. Part of the ABC transporter complex BtuCDF involved in vitamin B12 import. Involved in the translocation of the substrate across the membrane. This chain is Vitamin B12 import system permease protein BtuC, found in Vibrio cholerae serotype O1 (strain ATCC 39315 / El Tor Inaba N16961).